Reading from the N-terminus, the 429-residue chain is Glutamate-1-semialdehyde 2,1-aminomutase (429 aa).

Lys-267 bears the N6-(pyridoxal phosphate)lysine mark.

Belongs to the class-III pyridoxal-phosphate-dependent aminotransferase family. HemL subfamily. As to quaternary structure, homodimer. Pyridoxal 5'-phosphate is required as a cofactor.

It localises to the cytoplasm. It catalyses the reaction (S)-4-amino-5-oxopentanoate = 5-aminolevulinate. The protein operates within porphyrin-containing compound metabolism; protoporphyrin-IX biosynthesis; 5-aminolevulinate from L-glutamyl-tRNA(Glu): step 2/2. This Xanthomonas oryzae pv. oryzae (strain PXO99A) protein is Glutamate-1-semialdehyde 2,1-aminomutase.